Consider the following 119-residue polypeptide: Fluoride-specific ion channel FluC 2 (119 aa).

A helical membrane pass occupies residues 46 to 66 (FALGLLTFAGVTGDAALLVGV). Residues glycine 70 and threonine 73 each coordinate Na(+). A helical transmembrane segment spans residues 96–116 (LNAVGNLACALVGIGLAWGIV).

The protein belongs to the fluoride channel Fluc/FEX (TC 1.A.43) family.

The protein resides in the cell membrane. The enzyme catalyses fluoride(in) = fluoride(out). Its activity is regulated as follows. Na(+) is not transported, but it plays an essential structural role and its presence is essential for fluoride channel function. Functionally, fluoride-specific ion channel. Important for reducing fluoride concentration in the cell, thus reducing its toxicity. The chain is Fluoride-specific ion channel FluC 2 from Haloarcula marismortui (strain ATCC 43049 / DSM 3752 / JCM 8966 / VKM B-1809) (Halobacterium marismortui).